The sequence spans 434 residues: dTDP-D-glucose 4,6-dehydratase (434 aa).

Thr-134 is a substrate binding site. Asp-135 functions as the Proton donor in the catalytic mechanism. Catalysis depends on proton acceptor residues Glu-136 and Tyr-169. Over residues 286–309 (NNNNNNNNNNNNNNNNNNNNNNNN) the composition is skewed to low complexity. The tract at residues 286-310 (NNNNNNNNNNNNNNNNNNNNNNNND) is disordered.

The protein belongs to the NAD(P)-dependent epimerase/dehydratase family. dTDP-glucose dehydratase subfamily. It depends on NAD(+) as a cofactor.

It carries out the reaction dTDP-alpha-D-glucose = dTDP-4-dehydro-6-deoxy-alpha-D-glucose + H2O. This is dTDP-D-glucose 4,6-dehydratase (tgds) from Dictyostelium discoideum (Social amoeba).